The chain runs to 531 residues: Tyrosine/DOPA decarboxylase 2 (531 aa).

Lysine 319 bears the N6-(pyridoxal phosphate)lysine mark.

Belongs to the group II decarboxylase family. In terms of assembly, homodimer. It depends on pyridoxal 5'-phosphate as a cofactor. In terms of tissue distribution, predominantly expressed in the roots and stems, while a lower level expression is seen in the sepals and carpels of fully expanded flowers.

It catalyses the reaction L-tyrosine + H(+) = tyramine + CO2. It carries out the reaction L-dopa + H(+) = dopamine + CO2. The catalysed reaction is 5-hydroxy-L-tryptophan + H(+) = serotonin + CO2. Marginally higher substrate specificity for L-DOPA over L-tyrosine. In Papaver somniferum (Opium poppy), this protein is Tyrosine/DOPA decarboxylase 2 (TYDC2).